A 600-amino-acid polypeptide reads, in one-letter code: Proline--tRNA ligase (600 aa).

Belongs to the class-II aminoacyl-tRNA synthetase family. ProS type 1 subfamily. As to quaternary structure, homodimer.

Its subcellular location is the cytoplasm. It carries out the reaction tRNA(Pro) + L-proline + ATP = L-prolyl-tRNA(Pro) + AMP + diphosphate. In terms of biological role, catalyzes the attachment of proline to tRNA(Pro) in a two-step reaction: proline is first activated by ATP to form Pro-AMP and then transferred to the acceptor end of tRNA(Pro). As ProRS can inadvertently accommodate and process non-cognate amino acids such as alanine and cysteine, to avoid such errors it has two additional distinct editing activities against alanine. One activity is designated as 'pretransfer' editing and involves the tRNA(Pro)-independent hydrolysis of activated Ala-AMP. The other activity is designated 'posttransfer' editing and involves deacylation of mischarged Ala-tRNA(Pro). The misacylated Cys-tRNA(Pro) is not edited by ProRS. In Gloeothece citriformis (strain PCC 7424) (Cyanothece sp. (strain PCC 7424)), this protein is Proline--tRNA ligase.